The primary structure comprises 115 residues: MNAPPAFESFLLFEGEKITINKDTKVPKACLFTINKEDHTLGNIIKSQLLKDPQVLFAGYKVPHPLEHKIIIRVQTTPDYSPQEAFTNAITDLISELSLLEERFRTCLLPLRLLP.

The protein belongs to the archaeal Rpo11/eukaryotic RPB11/RPC19 RNA polymerase subunit family. Component of the RNA polymerase II (Pol II) complex consisting of 12 subunits. As to expression, ubiquitously expressed.

Its subcellular location is the nucleus. Functionally, DNA-dependent RNA polymerase catalyzes the transcription of DNA into RNA using the four ribonucleoside triphosphates as substrates. Component of RNA polymerase II which synthesizes mRNA precursors and many functional non-coding RNAs. Pol II is the central component of the basal RNA polymerase II transcription machinery. It is composed of mobile elements that move relative to each other. RPB11 is part of the core element with the central large cleft. This is DNA-directed RNA polymerase II subunit RPB11-b1 (POLR2J2) from Homo sapiens (Human).